The following is a 384-amino-acid chain: Galactokinase (384 aa).

Residue 34 to 37 (EHTD) coordinates substrate. 123 to 129 (SSGLSSS) serves as a coordination point for ATP. Ser-129 and Glu-161 together coordinate Mg(2+). Asp-173 functions as the Proton acceptor in the catalytic mechanism. Tyr-222 serves as a coordination point for substrate.

This sequence belongs to the GHMP kinase family. GalK subfamily.

It localises to the cytoplasm. The enzyme catalyses alpha-D-galactose + ATP = alpha-D-galactose 1-phosphate + ADP + H(+). It functions in the pathway carbohydrate metabolism; galactose metabolism. Catalyzes the transfer of the gamma-phosphate of ATP to D-galactose to form alpha-D-galactose-1-phosphate (Gal-1-P). In Actinobacillus pleuropneumoniae serotype 3 (strain JL03), this protein is Galactokinase.